The primary structure comprises 843 residues: KN motif and ankyrin repeat domain-containing protein 2 (843 aa).

A disordered region spans residues 1-31; sequence MAQVLHVPAPFPGTPGQASPAAFPSKEPDPP. Residues 1–72 are interaction with AIFM1; sequence MAQVLHVPAP…AVQRRPRLGS (72 aa). 5 positions are modified to phosphoserine: serine 19, serine 83, serine 86, serine 89, and serine 92. Arginine 105 carries the omega-N-methylarginine modification. Residues 161-182 form a disordered region; sequence LAGVGLLPPTPRSSGLSTPVAP. Position 170 is a phosphothreonine (threonine 170). Coiled-coil stretches lie at residues 183-234 and 282-313; these read SAGH…QLKS and DGEAALVAKVAVLETQLKKALQELRAAQTQQV. Threonine 331 is subject to Phosphothreonine. Serine 358 bears the Phosphoserine mark. The disordered stretch occupies residues 410-577; it reads TERSCTGAPR…VASGPDPEEE (168 aa). Over residues 457–470 the composition is skewed to low complexity; it reads AAASQDSQAADGAG. Position 532 is a phosphoserine (serine 532). Positions 547–561 are enriched in polar residues; that stretch reads ATTSLEGPQLSQESQ. An ANK 0; degenerate repeat occupies 606–643; sequence RELKVAYTTVLQEWLRLACRSDAHPELVRRHLVTFRAM. The tract at residues 661–827 is interaction with NCOA1; sequence TALHYSVSHA…YSRMNIKCSF (167 aa). 5 ANK repeats span residues 673–703, 707–740, 745–774, 778–808, and 812–842; these read PVVRQLLDSGVCHVDKLNRAGYSPIMLTALA, TQDDIETILQLFRLGNVNAKASQAGQTALMLAVS, DVVRALLACEADVNIQDEDGSTALMCACEH, EITGLLLAVPSCDISLTDRDGSTALMVALDA, and EIASMLYSRMNIKCSFAPMSDYESPASSSAE.

As to quaternary structure, interacts (non-phosphorylated form) with NCOA1; NCOA2 AND NCOA3. Interacts with AIFM1. Interacts with ARHGDIA; the interaction is direct and may regulate the interaction of ARHGDIA with RHOA, RAC1 and CDC42. Interacts (via ANK repeats 1-5) with KIF21A (via residues 1148-1169). Post-translationally, phosphorylated by casein kinase II upon estrogen stimulation. Phosphorylation induces the release by KANK2 of NCOA1 and its translocation to the nucleus where NCOA1 can activate gene transcription. In terms of tissue distribution, widely expressed with highest levels in liver and skeletal muscle.

Its subcellular location is the cytoplasm. The protein resides in the mitochondrion. Functionally, involved in transcription regulation by sequestering in the cytoplasm nuclear receptor coactivators such as NCOA1, NCOA2 and NCOA3. Involved in regulation of caspase-independent apoptosis by sequestering the proapoptotic factor AIFM1 in mitochondria. Pro-apoptotic stimuli can induce its proteasomal degradation allowing the translocation of AIFM1 to the nucleus to induce apoptosis. Involved in the negative control of vitamin D receptor signaling pathway. Involved in actin stress fibers formation through its interaction with ARHGDIA and the regulation of the Rho signaling pathway. May thereby play a role in cell adhesion and migration, regulating for instance podocytes migration during development of the kidney. Through the Rho signaling pathway may also regulate cell proliferation. The protein is KN motif and ankyrin repeat domain-containing protein 2 (Kank2) of Mus musculus (Mouse).